We begin with the raw amino-acid sequence, 227 residues long: Ribonuclease S-5 (227 aa).

The N-terminal stretch at 1–27 is a signal peptide; sequence MGITGMVYVVTMVFLLIVLILSSSTVG. Position 36 (Q36) interacts with RNA. The cysteines at positions 42 and 49 are disulfide-linked. N45 carries N-linked (GlcNAc...) asparagine glycosylation. Residues H60, 97–98, F107, 110–111, and 114–115 each bind RNA; these read NV, KE, and KH. H60 serves as the catalytic Proton donor. C75 and C118 are joined by a disulfide. E111 is an active-site residue. H115 functions as the Proton acceptor in the catalytic mechanism. N143 carries N-linked (GlcNAc...) asparagine glycosylation. 2 cysteine pairs are disulfide-bonded: C182/C220 and C197/C208.

Belongs to the RNase T2 family. N-glycan at Asn-45 consists of disaccharide (GlcNAc-GlcNAc). N-linked core structure at Asn-143 contains xylose.

It carries out the reaction a ribonucleotidyl-ribonucleotide-RNA + H2O = a 3'-end 3'-phospho-ribonucleotide-RNA + a 5'-end dephospho-ribonucleoside-RNA + H(+). Self-incompatibility (SI) is the inherited ability of a flowering plant to prevent self-fertilization by discriminating between self and non-self pollen during pollination. In many species, self-incompatibility is controlled by the single, multiallelic locus S. This chain is Ribonuclease S-5, found in Pyrus pyrifolia (Chinese pear).